A 305-amino-acid chain; its full sequence is ATP synthase gamma chain (305 aa).

Belongs to the ATPase gamma chain family. F-type ATPases have 2 components, CF(1) - the catalytic core - and CF(0) - the membrane proton channel. CF(1) has five subunits: alpha(3), beta(3), gamma(1), delta(1), epsilon(1). CF(0) has three main subunits: a, b and c.

The protein localises to the cell membrane. Functionally, produces ATP from ADP in the presence of a proton gradient across the membrane. The gamma chain is believed to be important in regulating ATPase activity and the flow of protons through the CF(0) complex. This chain is ATP synthase gamma chain, found in Streptomyces avermitilis (strain ATCC 31267 / DSM 46492 / JCM 5070 / NBRC 14893 / NCIMB 12804 / NRRL 8165 / MA-4680).